Reading from the N-terminus, the 405-residue chain is Putative aminotransferase AatC (405 aa).

K238 carries the N6-(pyridoxal phosphate)lysine modification.

It belongs to the class-I pyridoxal-phosphate-dependent aminotransferase family. As to quaternary structure, homodimer. Pyridoxal 5'-phosphate serves as cofactor.

Its subcellular location is the cytoplasm. This chain is Putative aminotransferase AatC (aatC), found in Rhizobium meliloti (strain 1021) (Ensifer meliloti).